Reading from the N-terminus, the 301-residue chain is MNIRDLEYLVALSEYKHFRRAADSCNVSQPTLSGQIRKLEDELGIILLERTSRKVLFTQSGMLLVDQARTVLREVKLLKEMASNQGKEMTGPLHIGLIPTVGPYLLPYIVPMLKAAFPDLEVFLYEAQTHQLLEQLETGRLDCAIVATVPETEAFIEVPIFNEKMLLAVSEHHPWAQESKLPMNQLNGQEMLMLDDGHCLRNQALDYCFTAGAKENSHFQATSLETLRNMVAANAGITFMPELAVLNEGTRKGVKYIPCYSPEPSRTIALVYRPGSPLRNRYERVASAVSDEVKSILDGLK.

Residues 1–58 (MNIRDLEYLVALSEYKHFRRAADSCNVSQPTLSGQIRKLEDELGIILLERTSRKVLFT) form the HTH lysR-type domain. Positions 18–37 (FRRAADSCNVSQPTLSGQIR) form a DNA-binding region, H-T-H motif.

The protein belongs to the LysR transcriptional regulatory family.

Functionally, required for the induction of a regulon of hydrogen peroxide inducible genes such as catalase and glutathione-reductase. The chain is Hydrogen peroxide-inducible genes activator (oxyR) from Haemophilus influenzae (strain ATCC 51907 / DSM 11121 / KW20 / Rd).